Consider the following 797-residue polypeptide: Probable DNA polymerase (797 aa).

The protein belongs to the DNA polymerase type-B family.

Its subcellular location is the mitochondrion. The catalysed reaction is DNA(n) + a 2'-deoxyribonucleoside 5'-triphosphate = DNA(n+1) + diphosphate. The protein is Probable DNA polymerase of Agaricus bitorquis (Pavement mushroom).